Consider the following 92-residue polypeptide: Toxin RelE3 (92 aa).

The protein belongs to the RelE toxin family.

Toxic component of a type II toxin-antitoxin (TA) system. Its toxic effect is neutralized by coexpression with cognate antitoxin RelB3 but no other ParD or RelB antitoxin. The polypeptide is Toxin RelE3 (relE3) (Caulobacter vibrioides (strain ATCC 19089 / CIP 103742 / CB 15) (Caulobacter crescentus)).